Reading from the N-terminus, the 314-residue chain is tRNA pseudouridine synthase B (314 aa).

Substrate is bound at residue His-43. Residue Asp-48 is the Nucleophile of the active site. Residues Tyr-76, Tyr-179, and Leu-200 each contribute to the substrate site.

The protein belongs to the pseudouridine synthase TruB family. Type 1 subfamily.

It carries out the reaction uridine(55) in tRNA = pseudouridine(55) in tRNA. Responsible for synthesis of pseudouridine from uracil-55 in the psi GC loop of transfer RNAs. The chain is tRNA pseudouridine synthase B from Serratia proteamaculans (strain 568).